A 235-amino-acid polypeptide reads, in one-letter code: Small ribosomal subunit protein uS3 (235 aa).

In terms of domain architecture, KH type-2 spans 39 to 107 (VRQFLNKELA…PAQINIAEVK (69 aa)). The segment at 216 to 235 (QPEQQPTDKPKKVPRGKGRK) is disordered.

Belongs to the universal ribosomal protein uS3 family. Part of the 30S ribosomal subunit. Forms a tight complex with proteins S10 and S14.

Functionally, binds the lower part of the 30S subunit head. Binds mRNA in the 70S ribosome, positioning it for translation. This Aggregatibacter actinomycetemcomitans (Actinobacillus actinomycetemcomitans) protein is Small ribosomal subunit protein uS3.